Here is a 31-residue protein sequence, read N- to C-terminus: Photosystem I reaction center subunit XII (31 aa).

Residues 7–26 form a helical membrane-spanning segment; it reads QIFIALLTALIPAFFALKLG.

The protein belongs to the PsaM family.

It localises to the plastid. The protein localises to the chloroplast thylakoid membrane. The sequence is that of Photosystem I reaction center subunit XII from Euglena granulata.